The following is a 682-amino-acid chain: Potassium-transporting ATPase ATP-binding subunit (682 aa).

The next 4 membrane-spanning stretches (helical) occupy residues 44-64 (VMAVVMGGTLLAAVITASGHG), 66-86 (AGFGWAVTAILFVTVLFGNFA), 233-253 (LTFLIVVASLPAIAGFVGVTL), and 257-277 (LLIALLVCLIPTTIGGLLPAI). The 4-aspartylphosphate intermediate role is filled by Asp-310. ATP-binding positions include Asp-347, Glu-351, 377–384 (FTAQTRMS), and Lys-395. Residues Asp-518 and Asp-522 each contribute to the Mg(2+) site. The next 3 helical transmembrane spans lie at 588–608 (FAILPALFAAAIPSMAALNVM), 616–636 (AVLAALIFNALIIPALIPLAL), and 658–678 (GLGGVLLPFAAIKLIDLALVA).

The protein belongs to the cation transport ATPase (P-type) (TC 3.A.3) family. Type IA subfamily. As to quaternary structure, the system is composed of three essential subunits: KdpA, KdpB and KdpC.

Its subcellular location is the cell inner membrane. It carries out the reaction K(+)(out) + ATP + H2O = K(+)(in) + ADP + phosphate + H(+). In terms of biological role, part of the high-affinity ATP-driven potassium transport (or Kdp) system, which catalyzes the hydrolysis of ATP coupled with the electrogenic transport of potassium into the cytoplasm. This subunit is responsible for energy coupling to the transport system and for the release of the potassium ions to the cytoplasm. The chain is Potassium-transporting ATPase ATP-binding subunit from Xanthomonas campestris pv. campestris (strain ATCC 33913 / DSM 3586 / NCPPB 528 / LMG 568 / P 25).